The sequence spans 121 residues: Huntingtin-interacting protein K (121 aa).

Acidic residues predominate over residues 1–13; it reads MATEGDVELELET. Residues 1 to 75 form a disordered region; that stretch reads MATEGDVELE…EQKAKQEREK (75 aa). Composition is skewed to basic and acidic residues over residues 20 to 47 and 60 to 75; these read RPPE…EKEI and GDRR…EREK. Ser-30 carries the phosphoserine modification. The segment at 52–121 is required for association with the NAA10-NAA15 complex; the sequence is LETAMSVIGD…VVEALIALTN (70 aa). Residues 62 to 107 are a coiled coil; sequence RRSREQKAKQEREKELAKVTIKKEDLELIMTEMEISRAAAERSLRE.

In terms of assembly, component of the N-terminal acetyltransferase A (NatA)/HYPK complex at least composed of NAA10, NAA15 and HYPK, which has N-terminal acetyltransferase activity. Within the complex interacts with NAA10. Within the complex interacts with NAA15. Predominantly interacts with NAA15 in the NAA10-NAA15 complex (also called the NatA complex); the interaction with the NatA complex reduces the acetylation activity of the NatA complex. Interacts with HTT (via N-terminus). The NatA complex is required for HYPK stability and for reducing polyQ aggregation of HTT. Component of the N-terminal acetyltransferase E (NatE)/HYPK complex at least composed of NAA10, NAA15, NAA50 and HYPK. Within the complex interacts with NAA10 and NAA15. Does not interact with NAA50. Interaction with NAA15 reduces the capacity of NAA15 to interact with NAA50. Its capacity to interact with the NatA complex is reduced by NAA50. Does not interact with the N-terminal acetyltransferase B (NatB) complex component NAA25 or the N-terminal acetyltransferase C (NatC) complex component NAA35.

The protein localises to the nucleus. It is found in the cytoplasm. In terms of biological role, component of several N-terminal acetyltransferase complexes. Inhibits the N-terminal acetylation activity of the N-terminal acetyltransferase NAA10-NAA15 complex (also called the NatA complex). Has chaperone-like activity preventing polyglutamine (polyQ) aggregation of HTT in neuronal cells probably while associated with the NatA complex. May play a role in the NatA complex-mediated N-terminal acetylation of PCNP. This chain is Huntingtin-interacting protein K, found in Homo sapiens (Human).